The primary structure comprises 368 residues: Histidinol-phosphate aminotransferase (368 aa).

The residue at position 229 (lysine 229) is an N6-(pyridoxal phosphate)lysine.

Belongs to the class-II pyridoxal-phosphate-dependent aminotransferase family. Histidinol-phosphate aminotransferase subfamily. Homodimer. It depends on pyridoxal 5'-phosphate as a cofactor.

The catalysed reaction is L-histidinol phosphate + 2-oxoglutarate = 3-(imidazol-4-yl)-2-oxopropyl phosphate + L-glutamate. Its pathway is amino-acid biosynthesis; L-histidine biosynthesis; L-histidine from 5-phospho-alpha-D-ribose 1-diphosphate: step 7/9. The polypeptide is Histidinol-phosphate aminotransferase (Acidovorax sp. (strain JS42)).